A 455-amino-acid polypeptide reads, in one-letter code: uncharacterized protein (455 aa).

Positions 1-20 (MGCCLSKKPSPSLPSSVKPS) are enriched in low complexity. Disordered regions lie at residues 1-234 (MGCC…IPAT) and 258-304 (RIAA…QNTK). Basic and acidic residues-rich tracts occupy residues 35-46 (EEAKPKSEKLNQ), 61-75 (SHEERSKKTESDKDS), 129-143 (RSFDFDQNERIRGGD), 156-166 (RGVERVHGSPR), and 173-186 (PSRERERSGSRERG). Polar residues predominate over residues 213–224 (SCGSSVNSSNNR). The span at 260–271 (AASPRSKSPARA) shows a compositional bias: low complexity.

This is an uncharacterized protein from Arabidopsis thaliana (Mouse-ear cress).